Consider the following 100-residue polypeptide: Urease subunit gamma (100 aa).

Belongs to the urease gamma subunit family. As to quaternary structure, heterotrimer of UreA (gamma), UreB (beta) and UreC (alpha) subunits. Three heterotrimers associate to form the active enzyme.

The protein resides in the cytoplasm. The enzyme catalyses urea + 2 H2O + H(+) = hydrogencarbonate + 2 NH4(+). The protein operates within nitrogen metabolism; urea degradation; CO(2) and NH(3) from urea (urease route): step 1/1. The protein is Urease subunit gamma of Kocuria rhizophila (strain ATCC 9341 / DSM 348 / NBRC 103217 / DC2201).